The following is a 198-amino-acid chain: tRNA (pseudouridine(54)-N(1))-methyltransferase (198 aa).

Residue L128 participates in S-adenosyl-L-methionine binding.

It belongs to the methyltransferase superfamily. TrmY family. In terms of assembly, homodimer.

It localises to the cytoplasm. It catalyses the reaction pseudouridine(54) in tRNA + S-adenosyl-L-methionine = N(1)-methylpseudouridine(54) in tRNA + S-adenosyl-L-homocysteine + H(+). In terms of biological role, specifically catalyzes the N1-methylation of pseudouridine at position 54 (Psi54) in tRNAs. This Haloarcula marismortui (strain ATCC 43049 / DSM 3752 / JCM 8966 / VKM B-1809) (Halobacterium marismortui) protein is tRNA (pseudouridine(54)-N(1))-methyltransferase.